A 360-amino-acid chain; its full sequence is S-adenosylmethionine:tRNA ribosyltransferase-isomerase (360 aa).

It belongs to the QueA family. In terms of assembly, monomer.

It is found in the cytoplasm. The enzyme catalyses 7-aminomethyl-7-carbaguanosine(34) in tRNA + S-adenosyl-L-methionine = epoxyqueuosine(34) in tRNA + adenine + L-methionine + 2 H(+). The protein operates within tRNA modification; tRNA-queuosine biosynthesis. Functionally, transfers and isomerizes the ribose moiety from AdoMet to the 7-aminomethyl group of 7-deazaguanine (preQ1-tRNA) to give epoxyqueuosine (oQ-tRNA). In Nitrobacter winogradskyi (strain ATCC 25391 / DSM 10237 / CIP 104748 / NCIMB 11846 / Nb-255), this protein is S-adenosylmethionine:tRNA ribosyltransferase-isomerase.